We begin with the raw amino-acid sequence, 37 residues long: DTASDAAAAAALTAABAAAAAKLTABBAAAAAAATAA.

It belongs to the type-I AFP family.

Its function is as follows. Contributes to protect fish blood from freezing at subzero sea water temperatures. Lowers the blood freezing point. Binds to nascent ice crystals and prevents further growth. The protein is Ice-structuring protein 3 of Pseudopleuronectes americanus (Winter flounder).